The primary structure comprises 75 residues: DNA-directed RNA polymerase subunit Rpo6 (75 aa).

The protein belongs to the archaeal Rpo6/eukaryotic RPB6 RNA polymerase subunit family. Part of the RNA polymerase complex.

Its subcellular location is the cytoplasm. It catalyses the reaction RNA(n) + a ribonucleoside 5'-triphosphate = RNA(n+1) + diphosphate. Functionally, DNA-dependent RNA polymerase (RNAP) catalyzes the transcription of DNA into RNA using the four ribonucleoside triphosphates as substrates. In Archaeoglobus fulgidus (strain ATCC 49558 / DSM 4304 / JCM 9628 / NBRC 100126 / VC-16), this protein is DNA-directed RNA polymerase subunit Rpo6.